Reading from the N-terminus, the 318-residue chain is Sol locus transcriptional repressor (318 aa).

TPR repeat units follow at residues 65-98 (ANAY…RPKT), 99-132 (INDV…QPNV), 133-166 (GISY…GSTN), and 167-199 (SVYR…EPEK).

Functionally, transcriptional repressor of the sol locus (adhE/aad, ctfA, ctfB and adc) genes for butanol and acetone formation. In Clostridium acetobutylicum (strain ATCC 824 / DSM 792 / JCM 1419 / IAM 19013 / LMG 5710 / NBRC 13948 / NRRL B-527 / VKM B-1787 / 2291 / W), this protein is Sol locus transcriptional repressor (solR).